The following is a 567-amino-acid chain: PHD finger protein 1 (567 aa).

The tract at residues 1-31 is disordered; the sequence is MAQPPRLSRSGASSLWDPASPAPTSGPRPRL. The region spanning 29 to 86 is the Tudor domain; it reads PRLWEGQDVLARWTDGLLYLGTIKKVDSAREVCLVQFEDDSQFLVLWKDISPAALPGE. PHD-type zinc fingers lie at residues 87-142 and 186-240; these read ELLC…CVFA and QSYC…CRGG. Disordered regions lie at residues 333–441 and 455–537; these read ARMP…TDAR and HPSA…GYLS. Gly360 carries the post-translational modification Phosphoserine. The segment covering 371-386 has biased composition (basic and acidic residues); that stretch reads PEPEPLRRRQKGKVEE. A Phosphoserine modification is found at Ser420. 3 stretches are compositionally biased toward low complexity: residues 423-433, 456-470, and 488-510; these read PNQSYQGSSGY, PSASTAGTSGDSGPP, and SAPHSMTASSSSVSSPSPGLPRR. Residues 524–534 show a composition bias toward gly residues; that stretch reads GTGGGVRGGVG.

Belongs to the Polycomblike family. Interacts with CHMP1. Associated component of the PRC2 complex. Interacts with p53/TP53. Highest levels in heart, skeletal muscle, and pancreas, lower levels in brain, placenta, lung, liver and kidney.

The protein localises to the nucleus. Its subcellular location is the cytoplasm. The protein resides in the cytoskeleton. It is found in the microtubule organizing center. It localises to the centrosome. Its function is as follows. Polycomb group (PcG) that specifically binds histone H3 trimethylated at 'Lys-36' (H3K36me3) and recruits the PRC2 complex. Involved in DNA damage response and is recruited at double-strand breaks (DSBs). Acts by binding to H3K36me3, a mark for transcriptional activation, and recruiting the PRC2 complex: it is however unclear whether recruitment of the PRC2 complex to H3K36me3 leads to enhance or inhibit H3K27me3 methylation mediated by the PRC2 complex. According to some reports, PRC2 recruitment by PHF1 promotes H3K27me3 and subsequent gene silencing by inducing spreading of PRC2 and H3K27me3 into H3K36me3 loci. According to another report, PHF1 recruits the PRC2 complex at double-strand breaks (DSBs) and inhibits the activity of PRC2. Regulates p53/TP53 stability and prolonges its turnover: may act by specifically binding to a methylated from of p53/TP53. The polypeptide is PHD finger protein 1 (PHF1) (Homo sapiens (Human)).